The primary structure comprises 950 residues: UvrABC system protein A (950 aa).

Residue 42-49 (GLSGSGKS) participates in ATP binding. Residues 262–289 (CPVCSYSLPELEPRLFSFNNPMGSCPTC) form a C4-type zinc finger. 2 consecutive ABC transporter domains span residues 319-596 (WDKR…EKSV) and 616-945 (VNPG…KYLK). Residue 649–656 (GVSGSGKS) participates in ATP binding. The segment at 748–774 (CEACQGDGVIKVEMHFLPDVYVPCEVC) adopts a C4-type zinc-finger fold.

The protein belongs to the ABC transporter superfamily. UvrA family. In terms of assembly, forms a heterotetramer with UvrB during the search for lesions.

The protein resides in the cytoplasm. Its function is as follows. The UvrABC repair system catalyzes the recognition and processing of DNA lesions. UvrA is an ATPase and a DNA-binding protein. A damage recognition complex composed of 2 UvrA and 2 UvrB subunits scans DNA for abnormalities. When the presence of a lesion has been verified by UvrB, the UvrA molecules dissociate. This Neisseria gonorrhoeae protein is UvrABC system protein A.